The following is a 699-amino-acid chain: Cyclic AMP-dependent transcription factor ATF-6 beta (699 aa).

At alanine 2 the chain carries N-acetylalanine. At 2–393 (AELMLLSEIA…GLKLGSGNRK (392 aa)) the chain is on the cytoplasmic side. 3 disordered regions span residues 59–114 (SLDV…QVPG), 218–246 (VQISMGPSPDSSSGKAPATRKPPLQPKPV), and 290–313 (EGPAPAAPRPERKSIVPAPMPGNS). The span at 68-78 (PPEPPWDPLPI) shows a compositional bias: pro residues. Positions 86–109 (SEPSSPCSSSSLSSESSHLSTEPP) are enriched in low complexity. The bZIP domain maps to 322-385 (LLKRQQRMIK…EALLAENSGL (64 aa)). Positions 324 to 344 (KRQQRMIKNRESACQSRRKKK) are basic motif. The segment at 347 to 354 (LQGLEARL) is leucine-zipper. The chain crosses the membrane as a helical; Signal-anchor for type II membrane protein span at residues 394–414 (VVCIMVFLLFIAFNFGPVSIS). Residues 415 to 699 (EPPPAPMSPR…ASQPLYLNHP (285 aa)) lie on the Lumenal side of the membrane. The interval 417-474 (PPAPMSPRMSREEPRPQRHLLGFSEPGPAHGMEPLREAAQSPGEQQPSSAGRPSFRNL) is disordered. A compositionally biased stretch (polar residues) spans 458-467 (PGEQQPSSAG). Asparagine 473 and asparagine 502 each carry an N-linked (GlcNAc...) asparagine glycan. A compositionally biased stretch (basic residues) spans 519–529 (RHQRGRRKIPH). The segment at 519–563 (RHQRGRRKIPHRAQERQKSQLRKKSPPVKPVPTQPPGPPERDPVG) is disordered. Positions 545 to 556 (PVKPVPTQPPGP) are enriched in pro residues. N-linked (GlcNAc...) asparagine glycans are attached at residues asparagine 607, asparagine 624, and asparagine 673. The disordered stretch occupies residues 657 to 699 (STVPPSLRKQPSPSPGNTTGGPLPGSAASPAHQASQPLYLNHP). A compositionally biased stretch (low complexity) spans 680–693 (PGSAASPAHQASQP).

This sequence belongs to the bZIP family. ATF subfamily. As to quaternary structure, homodimer and heterodimer with ATF6-alpha. The dimer interacts with the nuclear transcription factor Y (NF-Y) trimer through direct binding to NF-Y subunit C (NF-YC). Post-translationally, N-glycosylated. In terms of processing, during unfolded protein response, a fragment of approximately 60 kDa containing the cytoplasmic transcription factor domain is released by proteolysis. The cleavage is probably performed sequentially by site-1 (MBTPS1, S1P) and site-2 (MBTPS2, S2P) proteases.

It localises to the endoplasmic reticulum membrane. It is found in the nucleus. Functionally, precursor of the transcription factor form (Processed cyclic AMP-dependent transcription factor ATF-6 beta), which is embedded in the endoplasmic reticulum membrane. Endoplasmic reticulum stress promotes processing of this form, releasing the transcription factor form that translocates into the nucleus, where it activates transcription of genes involved in the unfolded protein response (UPR). Its function is as follows. Transcription factor that acts in the unfolded protein response (UPR) pathway by activating UPR target genes induced during ER stress. Binds DNA on the 5'-CCAC[GA]-3' half of the ER stress response element (ERSE) (5'-CCAATN(9)CCAC[GA]-3') when NF-Y is bound to ERSE. This is Cyclic AMP-dependent transcription factor ATF-6 beta (Atf6b) from Mus musculus (Mouse).